Reading from the N-terminus, the 181-residue chain is MLQALLIFVLQIIYVPVLTIRTILLVKNQTRSAAGVGLLEGAIYIISLGIVFQDLSNWMNIVAYIIGFSAGLLLGGYIENKLAIGYITYHVSLLDRCNELVDELRNAGFGVTLFEGEGINSVRYRLDIVAKRSREQELLEIVNRIAPKAFMSSYEIRSFKGGYLTKAMKKRTLMKKKDHAS.

Helical transmembrane passes span 6-26, 32-52, and 58-78; these read LIFVLQIIYVPVLTIRTILLV, SAAGVGLLEGAIYIISLGIVF, and WMNIVAYIIGFSAGLLLGGYI.

The protein belongs to the UPF0316 family.

Its subcellular location is the cell membrane. This Bacillus cytotoxicus (strain DSM 22905 / CIP 110041 / 391-98 / NVH 391-98) protein is UPF0316 protein Bcer98_2136.